The primary structure comprises 414 residues: 2,3-diketo-5-methylthiopentyl-1-phosphate enolase (414 aa).

The Proton acceptor role is filled by Lys-99. Residues Lys-148, 174-177 (KDDE), His-265, Gly-338, and 360-361 (GG) each bind substrate. Mg(2+)-binding residues include Lys-174, Asp-176, and Glu-177. The residue at position 174 (Lys-174) is an N6-carboxylysine.

Belongs to the RuBisCO large chain family. Type IV subfamily. In terms of assembly, homodimer. Requires Mg(2+) as cofactor.

The catalysed reaction is 5-methylsulfanyl-2,3-dioxopentyl phosphate = 2-hydroxy-5-methylsulfanyl-3-oxopent-1-enyl phosphate. It functions in the pathway amino-acid biosynthesis; L-methionine biosynthesis via salvage pathway; L-methionine from S-methyl-5-thio-alpha-D-ribose 1-phosphate: step 3/6. Catalyzes the enolization of 2,3-diketo-5-methylthiopentyl-1-phosphate (DK-MTP-1-P) into 2-hydroxy-3-keto-5-methylthiopentenyl-1-phosphate (HK-MTPenyl-1-P). In Bacillus cereus (strain ZK / E33L), this protein is 2,3-diketo-5-methylthiopentyl-1-phosphate enolase.